The chain runs to 349 residues: Inhibitor of nuclear factor kappa-B kinase-interacting protein (349 aa).

Over residues 1–11 the composition is skewed to basic residues; sequence MSEVKSRKKSG. The disordered stretch occupies residues 1–39; that stretch reads MSEVKSRKKSGTKGAPAEPGKRNEGGKSPEARGGGGRGW. Residues 19–30 show a composition bias toward basic and acidic residues; the sequence is PGKRNEGGKSPE. Residues 45–61 form a helical membrane-spanning segment; the sequence is GVSLLSLGTCLGLAWFV. A glycan (N-linked (GlcNAc...) asparagine) is linked at N145. 2 coiled-coil regions span residues 183–216 and 304–347; these read GLVT…IGDL and IGRL…HISD. N-linked (GlcNAc...) asparagine glycosylation occurs at N327.

In terms of processing, N-glycosylated.

It localises to the endoplasmic reticulum membrane. Functionally, target of p53/TP53 with pro-apoptotic function. This Bos taurus (Bovine) protein is Inhibitor of nuclear factor kappa-B kinase-interacting protein (IKBIP).